The primary structure comprises 117 residues: Small ribosomal subunit protein bS6m (117 aa).

The protein belongs to the bacterial ribosomal protein bS6 family. In terms of assembly, component of the mitochondrial small ribosomal subunit (mt-SSU). Mature N.crassa 74S mitochondrial ribosomes consist of a small (37S) and a large (54S) subunit. The 37S small subunit contains a 16S ribosomal RNA (16S mt-rRNA) and 32 different proteins. The 54S large subunit contains a 23S rRNA (23S mt-rRNA) and 42 different proteins.

The protein resides in the mitochondrion. Its function is as follows. Component of the mitochondrial ribosome (mitoribosome), a dedicated translation machinery responsible for the synthesis of mitochondrial genome-encoded proteins, including at least some of the essential transmembrane subunits of the mitochondrial respiratory chain. The mitoribosomes are attached to the mitochondrial inner membrane and translation products are cotranslationally integrated into the membrane. The protein is Small ribosomal subunit protein bS6m (mrp17) of Neurospora crassa (strain ATCC 24698 / 74-OR23-1A / CBS 708.71 / DSM 1257 / FGSC 987).